The sequence spans 322 residues: Glycerol-3-phosphate dehydrogenase [NAD(P)+] (322 aa).

NADPH is bound by residues Trp11, Arg31, Arg32, and Lys101. 2 residues coordinate sn-glycerol 3-phosphate: Lys101 and Gly130. Residue Ala134 participates in NADPH binding. Residues Lys184, Asp237, Ser247, Arg248, and Asn249 each contribute to the sn-glycerol 3-phosphate site. The active-site Proton acceptor is Lys184. Position 248 (Arg248) interacts with NADPH. The NADPH site is built by Val270 and Glu272.

It belongs to the NAD-dependent glycerol-3-phosphate dehydrogenase family.

It is found in the cytoplasm. It carries out the reaction sn-glycerol 3-phosphate + NAD(+) = dihydroxyacetone phosphate + NADH + H(+). It catalyses the reaction sn-glycerol 3-phosphate + NADP(+) = dihydroxyacetone phosphate + NADPH + H(+). Its pathway is membrane lipid metabolism; glycerophospholipid metabolism. Catalyzes the reduction of the glycolytic intermediate dihydroxyacetone phosphate (DHAP) to sn-glycerol 3-phosphate (G3P), the key precursor for phospholipid synthesis. The sequence is that of Glycerol-3-phosphate dehydrogenase [NAD(P)+] from Thermus thermophilus (strain ATCC BAA-163 / DSM 7039 / HB27).